We begin with the raw amino-acid sequence, 673 residues long: NADH-quinone oxidoreductase chain 3 (673 aa).

Positions 5–90 (RKIKIDDTII…PSEIRTNSPM (86 aa)) constitute a 2Fe-2S ferredoxin-type domain. 4 residues coordinate [2Fe-2S] cluster: Cys-37, Cys-48, Cys-51, and Cys-66. The 4Fe-4S His(Cys)3-ligated-type domain occupies 90–129 (MVKKAREGVMEFLLINHPLDCPICDQGGECDLQDQAMAYG). His-106, Cys-110, Cys-113, Cys-119, Cys-158, Cys-161, Cys-164, and Cys-208 together coordinate [4Fe-4S] cluster. The region spanning 227–283 (LTKTESIDVMDALGSSIRIDTKGREVMRILPRNHDGVNEEWISDKTRFVWDGLRRQR) is the 4Fe-4S Mo/W bis-MGD-type domain.

This sequence belongs to the complex I 75 kDa subunit family. In terms of assembly, NDH-1 is composed of at least 14 different subunits, Nqo1 to Nqo14. The complex has a L-shaped structure, with the hydrophobic arm (subunits Nqo7, Nqo8, Nqo10 to Nqo14) embedded in the inner membrane and the hydrophilic peripheral arm (subunits Nqo1 to Nqo6, Nqo9) protruding into the bacterial cytoplasm. The hydrophilic domain contains all the redox centers. It depends on [2Fe-2S] cluster as a cofactor. [4Fe-4S] cluster is required as a cofactor.

The protein resides in the cell inner membrane. It catalyses the reaction a quinone + NADH + 5 H(+)(in) = a quinol + NAD(+) + 4 H(+)(out). NDH-1 shuttles electrons from NADH, via FMN and iron-sulfur (Fe-S) centers, to quinones in the respiratory chain. The immediate electron acceptor for the enzyme in this species is believed to be ubiquinone. Couples the redox reaction to proton translocation (for every two electrons transferred, four hydrogen ions are translocated across the cytoplasmic membrane), and thus conserves the redox energy in a proton gradient. This chain is NADH-quinone oxidoreductase chain 3, found in Paracoccus denitrificans.